The following is a 389-amino-acid chain: tRNA(Met) cytidine acetate ligase (389 aa).

ATP-binding positions include 8-21 (IAEF…HEYL), G97, N153, and R176.

This sequence belongs to the TmcAL family.

It localises to the cytoplasm. The catalysed reaction is cytidine(34) in elongator tRNA(Met) + acetate + ATP = N(4)-acetylcytidine(34) in elongator tRNA(Met) + AMP + diphosphate. Catalyzes the formation of N(4)-acetylcytidine (ac(4)C) at the wobble position of elongator tRNA(Met), using acetate and ATP as substrates. First activates an acetate ion to form acetyladenylate (Ac-AMP) and then transfers the acetyl group to tRNA to form ac(4)C34. The polypeptide is tRNA(Met) cytidine acetate ligase (Lactococcus lactis subsp. cremoris (strain SK11)).